The sequence spans 398 residues: MAQVINEMDVPSHSFVFHGTGERYFLICVVNVLLTIITLGIYLPWALMKCKRYLYANMEVNGQRFSYGITGGNVFFSCLVFVFFYFAILMTVSADMPLIGCVLTLSLLVLLIFMAAKGLRYQALMTSLNGVRFSFNCSMKGVWWVTFFLPILMAIGMGTVFFISTKMLHANSSSSVIVSVVLMAIVGIVSIGIFNGTLYSLVMSFLWSNTSFGIHRFKVKLDTAYCIKYAILAFLALLPFLAVAGYIIFDQILNAYDSSVYANDDIENLQQFMEMQRKMIIAQLIYYFGIAVSTSYLTVSLRNHFMSNLSLNDGRIRFRSTLTYHGMLYRMCALVVISGITGGLAYPLLKIWMIDWQAKNTYLLGDLDDLPLINKEEQPDKGFLASISRGIMPSLPFL.

Residues 1 to 24 are Cytoplasmic-facing; it reads MAQVINEMDVPSHSFVFHGTGERY. The chain crosses the membrane as a helical span at residues 25–45; the sequence is FLICVVNVLLTIITLGIYLPW. Residues 46–73 lie on the Periplasmic side of the membrane; sequence ALMKCKRYLYANMEVNGQRFSYGITGGN. Residues 74 to 94 form a helical membrane-spanning segment; the sequence is VFFSCLVFVFFYFAILMTVSA. Position 95 (Asp-95) is a topological domain, cytoplasmic. Residues 96–116 form a helical membrane-spanning segment; sequence MPLIGCVLTLSLLVLLIFMAA. Residues 117–142 are Periplasmic-facing; the sequence is KGLRYQALMTSLNGVRFSFNCSMKGV. Residues 143–163 form a helical membrane-spanning segment; it reads WWVTFFLPILMAIGMGTVFFI. Over 164-175 the chain is Cytoplasmic; it reads STKMLHANSSSS. Residues 176-196 traverse the membrane as a helical segment; sequence VIVSVVLMAIVGIVSIGIFNG. The Periplasmic portion of the chain corresponds to 197–228; that stretch reads TLYSLVMSFLWSNTSFGIHRFKVKLDTAYCIK. Residues 229–249 form a helical membrane-spanning segment; sequence YAILAFLALLPFLAVAGYIIF. Over 250 to 278 the chain is Cytoplasmic; it reads DQILNAYDSSVYANDDIENLQQFMEMQRK. A helical transmembrane segment spans residues 279–299; that stretch reads MIIAQLIYYFGIAVSTSYLTV. Topologically, residues 300–333 are periplasmic; that stretch reads SLRNHFMSNLSLNDGRIRFRSTLTYHGMLYRMCA. A helical membrane pass occupies residues 334–354; the sequence is LVVISGITGGLAYPLLKIWMI. Topologically, residues 355–398 are cytoplasmic; it reads DWQAKNTYLLGDLDDLPLINKEEQPDKGFLASISRGIMPSLPFL.

Its subcellular location is the cell inner membrane. In Escherichia coli O157:H7, this protein is Inner membrane protein YjgN (yjgN).